A 212-amino-acid polypeptide reads, in one-letter code: Kynurenine formamidase (212 aa).

Trp17 contacts substrate. Positions 48, 52, and 54 each coordinate Zn(2+). The active-site Proton donor/acceptor is His58. The Zn(2+) site is built by His161 and Glu173.

Belongs to the Cyclase 1 superfamily. KynB family. Homodimer. Requires Zn(2+) as cofactor.

It carries out the reaction N-formyl-L-kynurenine + H2O = L-kynurenine + formate + H(+). The protein operates within amino-acid degradation; L-tryptophan degradation via kynurenine pathway; L-kynurenine from L-tryptophan: step 2/2. Its function is as follows. Catalyzes the hydrolysis of N-formyl-L-kynurenine to L-kynurenine, the second step in the kynurenine pathway of tryptophan degradation. This is Kynurenine formamidase from Salinibacter ruber (strain DSM 13855 / M31).